A 185-amino-acid polypeptide reads, in one-letter code: Elongation factor P (185 aa).

This sequence belongs to the elongation factor P family.

It localises to the cytoplasm. Its pathway is protein biosynthesis; polypeptide chain elongation. In terms of biological role, involved in peptide bond synthesis. Stimulates efficient translation and peptide-bond synthesis on native or reconstituted 70S ribosomes in vitro. Probably functions indirectly by altering the affinity of the ribosome for aminoacyl-tRNA, thus increasing their reactivity as acceptors for peptidyl transferase. The chain is Elongation factor P from Anoxybacillus flavithermus (strain DSM 21510 / WK1).